The following is a 238-amino-acid chain: MORN repeat-containing protein 3 (238 aa).

MORN repeat units follow at residues 38–60 (YTGEWLNNLRHGKGTYMWKRRKS), 62–84 (YEGDWKCGERSGFGTYSVQDSNT), 91–113 (YSGYWDNDKKHGYGTHFYSAKEY), 114–136 (YEGEWKCGKRCGWGRMYFANGDI), 137–159 (YEGEWLEDKHSGQGMLCLANENR), 160–182 (YEGSWKDGKKHGPGKFYYLNKGQ), and 184–205 (YEGVWVEDIPKCGTMVDFGRTE).

Its subcellular location is the cytoplasmic vesicle. It is found in the secretory vesicle. The protein localises to the acrosome. Assembles a suppression complex (suppresome) by tethering SIRT1 and MDM2 to regulate composite modifications of p53/TP53. Confers both deacetylation-mediated functional inactivation, by SIRT1, and ubiquitination-dependent degradation, by MDM2, of p53/TP53, promoting a proliferative and cell survival behaviors. May play a role in the regulation of spermatogenesis. The chain is MORN repeat-containing protein 3 (morn3) from Xenopus laevis (African clawed frog).